A 296-amino-acid polypeptide reads, in one-letter code: Putative F-box protein At1g67623 (296 aa).

One can recognise an F-box domain in the interval 21-70; sequence SLCLDSLPEDLLVEISSCTGASSLSAVRNLRLVSKSFRRICDEKYVFYRL.

The chain is Putative F-box protein At1g67623 from Arabidopsis thaliana (Mouse-ear cress).